A 194-amino-acid polypeptide reads, in one-letter code: dTTP/UTP pyrophosphatase (194 aa).

The active-site Proton acceptor is Asp-73.

The protein belongs to the Maf family. YhdE subfamily. It depends on a divalent metal cation as a cofactor.

The protein localises to the cytoplasm. The catalysed reaction is dTTP + H2O = dTMP + diphosphate + H(+). The enzyme catalyses UTP + H2O = UMP + diphosphate + H(+). Nucleoside triphosphate pyrophosphatase that hydrolyzes dTTP and UTP. May have a dual role in cell division arrest and in preventing the incorporation of modified nucleotides into cellular nucleic acids. In Clostridium botulinum (strain Okra / Type B1), this protein is dTTP/UTP pyrophosphatase.